Consider the following 64-residue polypeptide: Fatty acid synthase (64 aa).

The 64-residue stretch at 1 to 64 folds into the Carrier domain; it reads AEGEGQRDLL…VLSMREVRQL (64 aa). The residue at position 38 (Ser38) is an O-(pantetheine 4'-phosphoryl)serine; alternate. Ser38 bears the Phosphoserine; alternate mark.

As to quaternary structure, homodimer which is arranged in a head to tail fashion. Interacts with CEACAM1; this interaction is insulin and phosphorylation-dependent; reduces fatty-acid synthase activity.

Its subcellular location is the cytoplasm. The protein resides in the melanosome. It carries out the reaction acetyl-CoA + n malonyl-CoA + 2n NADPH + 2n H(+) = a long-chain fatty acid + (n+1) CoA + n CO2 + 2n NADP(+).. Fatty acid synthetase catalyzes the formation of long-chain fatty acids from acetyl-CoA, malonyl-CoA and NADPH. This multifunctional protein has 7 catalytic activities as an acyl carrier protein. This Oryctolagus cuniculus (Rabbit) protein is Fatty acid synthase (FASN).